The following is a 203-amino-acid chain: Glutathione-specific gamma-glutamylcyclotransferase (203 aa).

Residue 12–17 (VFGYGS) participates in substrate binding. Glu-105 functions as the Proton acceptor in the catalytic mechanism.

Belongs to the gamma-glutamylcyclotransferase family. ChaC subfamily.

It is found in the cytoplasm. Its subcellular location is the nucleus. The enzyme catalyses glutathione = L-cysteinylglycine + 5-oxo-L-proline. Functionally, gamma-glutamylcyclotransferase acting specifically on glutathione, but not on other gamma-glutamyl peptides. Allows utilization of gluthathione through subsequent cleavage of the Cys-Gly dipeptide by Cys-Gly metallodipeptidase dug1. This chain is Glutathione-specific gamma-glutamylcyclotransferase, found in Schizosaccharomyces pombe (strain 972 / ATCC 24843) (Fission yeast).